A 48-amino-acid chain; its full sequence is uncharacterized protein (48 aa).

This is an uncharacterized protein from Acidianus filamentous virus 2 (isolate Italy/Pozzuoli) (AFV-2).